Reading from the N-terminus, the 321-residue chain is Protein ATP1B4 (321 aa).

Residues 1–41 form a disordered region; that stretch reads MEPGMEMNTASEGGTRRGPENKHEEKVQDPNRGEAETKAEM. Over 1–72 the chain is Cytoplasmic; the sequence is MEPGMEMNTA…RTCMGRTAKS (72 aa). A compositionally biased stretch (basic and acidic residues) spans 14–41; that stretch reads GTRRGPENKHEEKVQDPNRGEAETKAEM. A helical membrane pass occupies residues 73–93; that stretch reads WGLILLFYFIFYTCLAGMFAF. At 94–321 the chain is on the extracellular side; sequence CMYVMLLTLS…RIIFTLSIGK (228 aa). N-linked (GlcNAc...) asparagine glycans are attached at residues Asn-132, Asn-176, and Asn-193. Residues Cys-165 and Cys-184 are joined by a disulfide bond. Intrachain disulfides connect Cys-194/Cys-210 and Cys-233/Cys-293. 3 N-linked (GlcNAc...) asparagine glycosylation sites follow: Asn-239, Asn-252, and Asn-270.

The protein belongs to the X(+)/potassium ATPases subunit beta family. As to quaternary structure, composed of two subunits: alpha (catalytic) and beta (accessory). Post-translationally, glycosylated. Expressed in skeletal muscle, intestine, heart, brain, retina, inner ear and skin.

It localises to the membrane. In terms of biological role, this is the non-catalytic component of the active enzyme, which catalyzes the hydrolysis of ATP coupled with the exchange of Na(+) and K(+) ions across the plasma membrane. This Gallus gallus (Chicken) protein is Protein ATP1B4 (ATP1B4).